Reading from the N-terminus, the 359-residue chain is 3-dehydroquinate synthase (359 aa).

NAD(+) is bound by residues 71–76 (DGEQYK), 104–108 (GVVGD), 128–129 (TT), K141, K150, and 168–171 (TLNT). Zn(2+) contacts are provided by E183, H247, and H264.

This sequence belongs to the sugar phosphate cyclases superfamily. Dehydroquinate synthase family. The cofactor is Co(2+). Zn(2+) is required as a cofactor. It depends on NAD(+) as a cofactor.

The protein resides in the cytoplasm. It carries out the reaction 7-phospho-2-dehydro-3-deoxy-D-arabino-heptonate = 3-dehydroquinate + phosphate. It functions in the pathway metabolic intermediate biosynthesis; chorismate biosynthesis; chorismate from D-erythrose 4-phosphate and phosphoenolpyruvate: step 2/7. Functionally, catalyzes the conversion of 3-deoxy-D-arabino-heptulosonate 7-phosphate (DAHP) to dehydroquinate (DHQ). The sequence is that of 3-dehydroquinate synthase from Coxiella burnetii (strain Dugway 5J108-111).